Here is a 309-residue protein sequence, read N- to C-terminus: Ribonuclease Z (309 aa).

Residues H63, H65, D67, H68, H145, D216, and H274 each coordinate Zn(2+). D67 serves as the catalytic Proton acceptor.

The protein belongs to the RNase Z family. Homodimer. Zn(2+) serves as cofactor.

The enzyme catalyses Endonucleolytic cleavage of RNA, removing extra 3' nucleotides from tRNA precursor, generating 3' termini of tRNAs. A 3'-hydroxy group is left at the tRNA terminus and a 5'-phosphoryl group is left at the trailer molecule.. Zinc phosphodiesterase, which displays some tRNA 3'-processing endonuclease activity. Probably involved in tRNA maturation, by removing a 3'-trailer from precursor tRNA. This chain is Ribonuclease Z, found in Streptococcus pneumoniae serotype 2 (strain D39 / NCTC 7466).